A 415-amino-acid chain; its full sequence is Serine hydroxymethyltransferase (415 aa).

(6S)-5,6,7,8-tetrahydrofolate-binding positions include L117 and 121 to 123; that span reads GHL. K226 is modified (N6-(pyridoxal phosphate)lysine). (6S)-5,6,7,8-tetrahydrofolate contacts are provided by residues E241 and 349 to 351; that span reads SPF.

This sequence belongs to the SHMT family. In terms of assembly, homodimer. Requires pyridoxal 5'-phosphate as cofactor.

It is found in the cytoplasm. The enzyme catalyses (6R)-5,10-methylene-5,6,7,8-tetrahydrofolate + glycine + H2O = (6S)-5,6,7,8-tetrahydrofolate + L-serine. It participates in one-carbon metabolism; tetrahydrofolate interconversion. Its pathway is amino-acid biosynthesis; glycine biosynthesis; glycine from L-serine: step 1/1. Functionally, catalyzes the reversible interconversion of serine and glycine with tetrahydrofolate (THF) serving as the one-carbon carrier. This reaction serves as the major source of one-carbon groups required for the biosynthesis of purines, thymidylate, methionine, and other important biomolecules. Also exhibits THF-independent aldolase activity toward beta-hydroxyamino acids, producing glycine and aldehydes, via a retro-aldol mechanism. This is Serine hydroxymethyltransferase from Geobacter sulfurreducens (strain ATCC 51573 / DSM 12127 / PCA).